A 369-amino-acid chain; its full sequence is UDP-N-acetylglucosamine--N-acetylmuramyl-(pentapeptide) pyrophosphoryl-undecaprenol N-acetylglucosamine transferase (369 aa).

Residues 10 to 12 (TGG), Asn-124, Ser-195, Ile-252, and Gln-297 contribute to the UDP-N-acetyl-alpha-D-glucosamine site.

It belongs to the glycosyltransferase 28 family. MurG subfamily.

It localises to the cell membrane. It catalyses the reaction Mur2Ac(oyl-L-Ala-gamma-D-Glu-L-Lys-D-Ala-D-Ala)-di-trans,octa-cis-undecaprenyl diphosphate + UDP-N-acetyl-alpha-D-glucosamine = beta-D-GlcNAc-(1-&gt;4)-Mur2Ac(oyl-L-Ala-gamma-D-Glu-L-Lys-D-Ala-D-Ala)-di-trans,octa-cis-undecaprenyl diphosphate + UDP + H(+). Its pathway is cell wall biogenesis; peptidoglycan biosynthesis. Functionally, cell wall formation. Catalyzes the transfer of a GlcNAc subunit on undecaprenyl-pyrophosphoryl-MurNAc-pentapeptide (lipid intermediate I) to form undecaprenyl-pyrophosphoryl-MurNAc-(pentapeptide)GlcNAc (lipid intermediate II). The polypeptide is UDP-N-acetylglucosamine--N-acetylmuramyl-(pentapeptide) pyrophosphoryl-undecaprenol N-acetylglucosamine transferase (Leuconostoc citreum (strain KM20)).